Consider the following 452-residue polypeptide: Probable M18 family aminopeptidase 1 (452 aa).

Zn(2+)-binding residues include His-93, His-168, and His-427.

Belongs to the peptidase M18 family. Zn(2+) is required as a cofactor.

The protein is Probable M18 family aminopeptidase 1 (apeA) of Thermotoga neapolitana.